A 406-amino-acid polypeptide reads, in one-letter code: Ubiquitin-like modifier-activating enzyme 5 (406 aa).

ATP contacts are provided by Gly82, Asp103, Lys126, Asn149, and Asn183. Residues Cys225 and Cys228 each coordinate Zn(2+). The Glycyl thioester intermediate role is filled by Cys249. Zn(2+)-binding residues include Cys302 and Cys307. The segment at 373-397 (EAPSKSTETTSEATTTTTGDETSLD) is disordered. Over residues 378-393 (STETTSEATTTTTGDE) the composition is skewed to low complexity.

Belongs to the ubiquitin-activating E1 family. UBA5 subfamily.

In terms of biological role, E1-like enzyme which activates UFM1. The polypeptide is Ubiquitin-like modifier-activating enzyme 5 (Drosophila willistoni (Fruit fly)).